We begin with the raw amino-acid sequence, 288 residues long: Alpha/beta hydrolase domain-containing protein 17B (288 aa).

Active-site charge relay system residues include serine 170, aspartate 235, and histidine 264. Serine 282 carries the phosphoserine modification.

It belongs to the AB hydrolase superfamily. ABHD17 family. Palmitoylated on cysteine residues located in a cysteine cluster at the N-terminus which promotes membrane localization. Palmitoylation is required for post-synaptic localization and for depalmitoylating activity towards DLG4/PSD95.

The protein localises to the cell membrane. The protein resides in the recycling endosome membrane. Its subcellular location is the cell projection. It is found in the dendritic spine. It localises to the postsynaptic density membrane. It carries out the reaction S-hexadecanoyl-L-cysteinyl-[protein] + H2O = L-cysteinyl-[protein] + hexadecanoate + H(+). With respect to regulation, inhibited by palmostatin-B. Functionally, hydrolyzes fatty acids from S-acylated cysteine residues in proteins. Has depalmitoylating activity towards DLG4/PSD95. Has depalmitoylating activity towards GAP43. Has depalmitoylating activity towards MAP6. Has depalmitoylating activity towards NRAS. The sequence is that of Alpha/beta hydrolase domain-containing protein 17B from Homo sapiens (Human).